We begin with the raw amino-acid sequence, 474 residues long: Immunoglobulin heavy constant mu (474 aa).

Residues 1 to 105 (GSASAPTLFP…NKEKNVPLPV (105 aa)) form a CH1 region. At 1 to 450 (GSASAPTLFP…EEGFENLWAT (450 aa)) the chain is on the extracellular side. 4 consecutive Ig-like domains span residues 6 to 102 (PTLF…KNVP), 111 to 211 (PKVS…QNAS), 229 to 319 (PSFA…QTIS), and 329 to 430 (PDVY…RTVD). Intrachain disulfides connect Cys-28/Cys-88 and Cys-134/Cys-197. An N-linked (GlcNAc...) (complex) asparagine glycan is attached at Asn-46. The CH2 stretch occupies residues 106–217 (IAELPPKVSV…QNASSMCVPD (112 aa)). Asn-209 is a glycosylation site (N-linked (GlcNAc...) (complex) asparagine). Residues 218–323 (QDTAIRVFAI…LKQTISRPKG (106 aa)) form a CH3 region. Intrachain disulfides connect Cys-244–Cys-303 and Cys-351–Cys-413. 2 N-linked (GlcNAc...) asparagine glycosylation sites follow: Asn-272 and Asn-279. The interval 324–452 (VALHRPDVYL…GFENLWATAS (129 aa)) is CH4. The interval 437 to 453 (VSADEEGFENLWATAST) is important for IgM oligomerization. An N-linked (GlcNAc...) asparagine glycan is attached at Asp-440. The chain crosses the membrane as a helical span at residues 451-471 (ASTFIVLFLLSLFYSTTVTLF). Residues 472–474 (KVK) lie on the Cytoplasmic side of the membrane.

The basic structural unit of both sIgM and mIgM molecules consists of two identical heavy chains and two identical light chains; disulfide-linked. N-terminal variable regions of the heavy and light chains form the antigen binding sites, whereas the C-terminal constant regions of the heavy chains interact with immune receptors to mediate effector functions. In terms of assembly, part of IgM antibody. Forms high order oligomers, homopentamers stabilized by the JCHAIN and homohexamers that lack JCHAIN. The oligomerization amplifies an inherently low affinity of IgM antibodies for the antigen by multi-point attachment (avidity). Adjacent IgM protomers associate via interchain disulfide links to form an asymmetric pentameric structure with a 50 degree gap. A single copy of JCHAIN is covalently linked to the first and the fifth IgM monomers via interchain disulfide bonds thus closing the pentamer ring. Only JCHAIN-containing IgM binds PIGR secretory component (via D1-CDR1 region); this interaction is a prerequisite for IgM transcytosis across mucosal epithelium. Pentameric sIgM interacts (via CH4 domain) with FCRM (via Ig-like domain); the interaction is glycan-independent and multivalent theoretically involving up to eight binding sites for the IgM pentamer. Interacts with FCAMR; this interaction facilitates the endocytosis of IgM-coated microbes or IgM-antigen immune complexes. Antigen-bound IgM (via the Fc region) binds to globular domains of C1q component of the complement system, all three modules C1QA, C1QB and C1QC being involved in IgM binding; this interaction is multivalent. Pentameric sIgM (via Fc region) interacts with CD5L (via SRCR2) through interchain disulfide-linkages; this interaction protects CD5L from renal excretion and provides for high levels of CD5L in circulation. As to quaternary structure, part of IgM B cell receptor complex on pre-B cells, immature and mature B cells. The BCR complex consists of one membrane-bound IgM molecule responsible for antigen binding, non-covalently associated with CD79A and CD79B signaling chains. In terms of processing, N-glycosylated; important for IgM secretion and its localization at the plasma membrane. The interaction with FCMR is glycan-independent.

Its subcellular location is the secreted. The protein resides in the cell membrane. Constant region of immunoglobulin heavy chains. Immunoglobulins, also known as antibodies, are membrane-bound or secreted glycoproteins produced by B lymphocytes. In the recognition phase of humoral immunity, the membrane-bound immunoglobulins serve as receptors which, upon binding of a specific antigen, trigger the clonal expansion and differentiation of B lymphocytes into immunoglobulins-secreting plasma cells. Secreted immunoglobulins mediate the effector phase of humoral immunity, which results in the elimination of bound antigens. The antigen binding site is formed by the variable domain of one heavy chain, together with that of its associated light chain. Thus, each immunoglobulin has two antigen binding sites with remarkable affinity for a particular antigen. The variable domains are assembled by a process called V-(D)-J rearrangement and can then be subjected to somatic hypermutations which, after exposure to antigen and selection, allow affinity maturation for a particular antigen. In terms of biological role, constant region of secreted IgM (sIgM), also known as the Fc region of IgM antibody. Able to multimerize, forms high order polymers, mainly pentamers and occasionally hexamers, providing for multivalency and high avidity recognition of antigens. Natural sIgM are polyreactive and recognize conserved self- and pathogen-derived structures, whereas immune sIgM are secreted only upon exposure to pathogens and are antigen-specific. Both natural and immune sIgM are required for an efficient humoral immune response to infection. Mediates sIgM effector functions mostly via Fc receptors and the complement system. On lymphoid cells binds high-affinity Fc receptor FCMR and promotes induction of an efficient neutralizing IgG response while maintaining tolerance to self-antigens. Recruits C1q complement component to initiate the classical complement pathway, facilitating the recognition and neutralization of pathogens by the host. Together with C1q and mannose-binding lectin promotes the phagocytosis of apoptotic cells by macrophages, ensuring the clearance of potential autoimmune epitopes from tissues. Involved in mucosal immunity. It is transported by transcytosis across mucosal epithelium by PIGR and secreted on the apical side in complex with PIGR secretory component to scan mucosal lining for pathogens. IgM-antigen complexes undergo FCMR-mediated retrotranscytosis across mucosal M cells toward antigen-presenting cells in mucosal lymphoid tissues. Its function is as follows. Constant region of membrane-bound IgM, part of the B cell receptor complex (BCR). IgM BCR provides constitutive tonic signaling for B cell survival. Mediates pre-BCR signaling that regulates B cell selection and rearrangement of Ig genes via allelic exclusion. This is Immunoglobulin heavy constant mu from Homo sapiens (Human).